The primary structure comprises 355 residues: 3-isopropylmalate dehydrogenase (355 aa).

77–90 (GAKWDNLPREKRPE) lines the NAD(+) pocket. Residues R97, R107, R135, and D220 each coordinate substrate. Mg(2+) is bound by residues D220, D244, and D248. 277–289 (GSAPDIAGQGIAN) serves as a coordination point for NAD(+).

The protein belongs to the isocitrate and isopropylmalate dehydrogenases family. LeuB type 1 subfamily. In terms of assembly, homodimer. It depends on Mg(2+) as a cofactor. Requires Mn(2+) as cofactor.

Its subcellular location is the cytoplasm. It carries out the reaction (2R,3S)-3-isopropylmalate + NAD(+) = 4-methyl-2-oxopentanoate + CO2 + NADH. It participates in amino-acid biosynthesis; L-leucine biosynthesis; L-leucine from 3-methyl-2-oxobutanoate: step 3/4. Its function is as follows. Catalyzes the oxidation of 3-carboxy-2-hydroxy-4-methylpentanoate (3-isopropylmalate) to 3-carboxy-4-methyl-2-oxopentanoate. The product decarboxylates to 4-methyl-2 oxopentanoate. This is 3-isopropylmalate dehydrogenase from Sulfurimonas denitrificans (strain ATCC 33889 / DSM 1251) (Thiomicrospira denitrificans (strain ATCC 33889 / DSM 1251)).